We begin with the raw amino-acid sequence, 837 residues long: Endo-1,4-beta-xylanase Z (837 aa).

Residues 1–28 (MSRKLFSVLLVGLMLMTSLLVTISSTSA) form the signal peptide. The CBM6 domain maps to 299-420 (TRIEAEDYDG…PVNIDWFTFG (122 aa)). Residues 424–492 (SSTGLGDLNG…ILRIITEFPG (69 aa)) enclose the Dockerin domain. A GH10 domain is found at 512-833 (TISGNALRDY…KPAYNAIKEA (322 aa)). E645 functions as the Proton donor in the catalytic mechanism. Residue E754 is the Nucleophile of the active site. C783 and C789 are disulfide-bonded.

Belongs to the glycosyl hydrolase 10 (cellulase F) family.

The catalysed reaction is Endohydrolysis of (1-&gt;4)-beta-D-xylosidic linkages in xylans.. This chain is Endo-1,4-beta-xylanase Z (xynZ), found in Acetivibrio thermocellus (strain ATCC 27405 / DSM 1237 / JCM 9322 / NBRC 103400 / NCIMB 10682 / NRRL B-4536 / VPI 7372) (Clostridium thermocellum).